Reading from the N-terminus, the 750-residue chain is MAQEEMEVDLLNLLNPMYSNRDVSTSHQPRGSGQVLFLPPPLTYSDDSEDLFLGPTEPHDVIVLDSVEEAPGQVAAPTNALQMLHSALEQLRQAAEQRSSVRPTRVQRRSTRRHQRGGSQRTAGTSSRAALSNFFQINRTQGVAPTSEREERNAALRTESSRTSPGDSSDETVELSEEEEGGGGSSTDVDEVDINAGAAPPAEPAPEELQINVIEVQAEAPESLPVPESVTLPLQIQKKQKTPVKQLSPVKHLPPEEDEGDTCAICFEPWTNAGQHRLSALRCGHLFGFTCIERWLKGGAAKCPQCNKKAKRADIVVLYARTLKALDTSEQERMKSSLEMEQSMRRKAELESAQCRLQVQVLTDECGKLRKQIQELKMLIAQHGTSTSMQASSSRSTISGSLSSSQGQHKYSFEKAILISQTGSCRVMSYCESMSCLVVSQPSPQTTLIPGCGIKKLSAANLKSSQYVPIHSKQIRGLAFSNRSDGLLLSAALDNTIKLTSLMTNTVVQTYNTGRPVWSCCWCSDNSNYVYAGLINGSVLVYDLRDTSNCVQELVPLGSRCPVVSLSYVPRAASEVFPCGGVLVGTLEGACFWEMKDDQYRPHVLPLEPGGCTDIQIESNTRHCLVTYRPGKNHNYVRGVMMELTSNRLNDSEDEYSCSCYPVQTFNAGNTCKLLTKNAIFQSPERDGTILVCAGDEASNSAMLWHSGNGTLLQKLQADQPVLDICPMEVNQSSMLATLTEKMIKIYKWE.

Residues 92–206 (RQAAEQRSSV…GAAPPAEPAP (115 aa)) are disordered. Over residues 105–116 (RVQRRSTRRHQR) the composition is skewed to basic residues. The span at 122-144 (TAGTSSRAALSNFFQINRTQGVA) shows a compositional bias: polar residues. Residues 168 to 181 (SSDETVELSEEEEG) are compositionally biased toward acidic residues. An RING-type; degenerate zinc finger spans residues 263–307 (CAICFEPWTNAGQHRLSALRCGHLFGFTCIERWLKGGAAKCPQCN). Low complexity predominate over residues 387–405 (TSMQASSSRSTISGSLSSS). Residues 387-406 (TSMQASSSRSTISGSLSSSQ) are disordered. 3 WD repeats span residues 470-510 (IHSK…VVQT), 512-552 (NTGR…NCVQ), and 558-603 (GSRC…YRPH).

The cofactor is [4Fe-4S] cluster.

The protein resides in the nucleus. It is found in the PML body. The protein localises to the cytoplasm. The catalysed reaction is S-ubiquitinyl-[E2 ubiquitin-conjugating enzyme]-L-cysteine + [acceptor protein]-L-lysine = [E2 ubiquitin-conjugating enzyme]-L-cysteine + N(6)-ubiquitinyl-[acceptor protein]-L-lysine.. It functions in the pathway protein modification; protein ubiquitination. E3 ubiquitin-protein ligase required for the repair of DNA interstrand cross-links (ICL) in response to DNA damage. Plays a key role in RPA-mediated DNA damage signaling and repair. Required to translesion DNA synthesis across DNA-protein cross-link adducts by catalyzing ubiquitination of proteins on single-stranded DNA (ssDNA). Mediates ubiquitination of the hmces DNA-protein cross-link, possibly promoting its degradation. This Xenopus laevis (African clawed frog) protein is E3 ubiquitin-protein ligase rfwd3.S (rfwd3.S).